We begin with the raw amino-acid sequence, 201 residues long: Pyridoxal 5'-phosphate synthase subunit PdxT (201 aa).

Residue G51 to S53 coordinates L-glutamine. C83 (nucleophile) is an active-site residue. L-glutamine-binding positions include R112 and I141–R142. Catalysis depends on charge relay system residues H182 and E184.

The protein belongs to the glutaminase PdxT/SNO family. In the presence of PdxS, forms a dodecamer of heterodimers. Only shows activity in the heterodimer.

The catalysed reaction is aldehydo-D-ribose 5-phosphate + D-glyceraldehyde 3-phosphate + L-glutamine = pyridoxal 5'-phosphate + L-glutamate + phosphate + 3 H2O + H(+). The enzyme catalyses L-glutamine + H2O = L-glutamate + NH4(+). It functions in the pathway cofactor biosynthesis; pyridoxal 5'-phosphate biosynthesis. Catalyzes the hydrolysis of glutamine to glutamate and ammonia as part of the biosynthesis of pyridoxal 5'-phosphate. The resulting ammonia molecule is channeled to the active site of PdxS. This chain is Pyridoxal 5'-phosphate synthase subunit PdxT, found in Thermobifida fusca (strain YX).